The chain runs to 344 residues: Selenide, water dikinase (344 aa).

Residue Cys16 is part of the active site. Residues Lys19 and 47–49 (SRD) each bind ATP. Residue Asp50 coordinates Mg(2+). ATP-binding positions include Asp67, Asp90, and 138–140 (GHS). Mg(2+) is bound at residue Asp90. Position 226 (Asp226) interacts with Mg(2+).

This sequence belongs to the selenophosphate synthase 1 family. Class I subfamily. Homodimer. It depends on Mg(2+) as a cofactor.

The enzyme catalyses hydrogenselenide + ATP + H2O = selenophosphate + AMP + phosphate + 2 H(+). Synthesizes selenophosphate from selenide and ATP. In Pseudomonas aeruginosa (strain ATCC 15692 / DSM 22644 / CIP 104116 / JCM 14847 / LMG 12228 / 1C / PRS 101 / PAO1), this protein is Selenide, water dikinase.